The chain runs to 294 residues: MSWLRSCGERTAPALRGTYRILAGQSRFVNSSSHLQHTPLTVLQQEHGIRRIILNNPQQRNALSLPMIQSLQKDILHEADDPNLRVIIISAEGNVFSSGHNLKELTAEYGKDYHMEVFNTCAKLMTLFQTLPVPVIAEVNGLATAAGCQLVASCDIAVASDKSRFATPGVNVGLFCSTPGVALGRAVPRKVALEMLFTGEPISAHDALLHGLVSKVVPEENLKSETNRIALKICQTSHSVVALGKSTFYRQMAKSLTDAYKLTSEVMVENLAMKDGQEGLKSFIQKRKPVWTHS.

The transit peptide at 1 to 61 (MSWLRSCGER…IILNNPQQRN (61 aa)) directs the protein to the mitochondrion.

Belongs to the enoyl-CoA hydratase/isomerase family.

The protein resides in the mitochondrion. In terms of biological role, may play a role in fatty acid biosynthesis and insulin sensitivity. This Xenopus laevis (African clawed frog) protein is Enoyl-CoA hydratase domain-containing protein 3, mitochondrial (echdc3).